The sequence spans 394 residues: Elongation factor Tu (394 aa).

Positions 10–204 (KPHINVGTIG…ALDKYIPEPQ (195 aa)) constitute a tr-type G domain. The segment at 19 to 26 (GHVDHGKT) is G1. 19–26 (GHVDHGKT) lines the GTP pocket. Residue Thr26 coordinates Mg(2+). A G2 region spans residues 60–64 (GITIN). Positions 81-84 (DCPG) are G3. GTP is bound by residues 81-85 (DCPGH) and 136-139 (NKCD). The segment at 136–139 (NKCD) is G4. Residues 174–176 (SAL) are G5.

It belongs to the TRAFAC class translation factor GTPase superfamily. Classic translation factor GTPase family. EF-Tu/EF-1A subfamily. As to quaternary structure, monomer.

The protein localises to the cytoplasm. The enzyme catalyses GTP + H2O = GDP + phosphate + H(+). GTP hydrolase that promotes the GTP-dependent binding of aminoacyl-tRNA to the A-site of ribosomes during protein biosynthesis. In Hamiltonella defensa subsp. Acyrthosiphon pisum (strain 5AT), this protein is Elongation factor Tu.